The sequence spans 155 residues: Ribosomal RNA large subunit methyltransferase H (155 aa).

S-adenosyl-L-methionine is bound by residues leucine 73, glycine 104, and isoleucine 123–phenylalanine 128.

The protein belongs to the RNA methyltransferase RlmH family. In terms of assembly, homodimer.

The protein resides in the cytoplasm. The catalysed reaction is pseudouridine(1915) in 23S rRNA + S-adenosyl-L-methionine = N(3)-methylpseudouridine(1915) in 23S rRNA + S-adenosyl-L-homocysteine + H(+). Specifically methylates the pseudouridine at position 1915 (m3Psi1915) in 23S rRNA. This Francisella tularensis subsp. novicida (strain U112) protein is Ribosomal RNA large subunit methyltransferase H.